The following is a 329-amino-acid chain: MSAEASGPAAAAAPSLEAPKPSGLEPGPAAYGLKPLTPNSKYVKLNVGGSLHYTTLRTLTGQDTMLKAMFSGRVEVLTDAGGWVLIDRSGRHFGTILNYLRDGSVPLPESTRELGELLGEARYYLVQGLIEDCQLALQQKRETLSPLCLIPMVTSPREEQQLLASTSKPVVKLLHNRSNNKYSYTSTSDDNLLKNIELFDKLALRFHGRLLFLKDVLGDEICCWSFYGQGRKIAEVCCTSIVYATEKKQTKVEFPEARIFEETLNILIYETPRGPDPALLEATGGAAGAGGAGRGEDEENREHRVRRIHVRRHITHDERPHGQQIVFKD.

Low complexity predominate over residues 1-22 (MSAEASGPAAAAAPSLEAPKPS). The interval 1 to 31 (MSAEASGPAAAAAPSLEAPKPSGLEPGPAAY) is disordered. Positions 41 to 109 (KYVKLNVGGS…LRDGSVPLPE (69 aa)) constitute a BTB domain. Residues 282–303 (ATGGAAGAGGAGRGEDEENREH) are disordered.

This sequence belongs to the BACURD family. Homotetramer; forms a two-fold symmetric tetramer in solution. Interacts with CUL3; interaction is direct and forms a 5:5 heterodecamer. Component of the BCR(KCTD13) E3 ubiquitin ligase complex, at least composed of CUL3, KCTD13/BACURD1 and RBX1. Interacts with RHOA; with a preference for RhoA-GDP. Interacts with POLD2 and PCNA. Interacts with SPRTN. In terms of tissue distribution, expressed in a wide variety of tissues.

Its subcellular location is the nucleus. The protein operates within protein modification; protein ubiquitination. In terms of biological role, substrate-specific adapter of a BCR (BTB-CUL3-RBX1) E3 ubiquitin-protein ligase complex required for synaptic transmission. The BCR(KCTD13) E3 ubiquitin ligase complex mediates the ubiquitination of RHOA, leading to its degradation by the proteasome Degradation of RHOA regulates the actin cytoskeleton and promotes synaptic transmission. In Homo sapiens (Human), this protein is BTB/POZ domain-containing adapter for CUL3-mediated RhoA degradation protein 1 (KCTD13).